Reading from the N-terminus, the 273-residue chain is Putative pyruvate, phosphate dikinase regulatory protein (273 aa).

153 to 160 (GISRTSKT) provides a ligand contact to ADP.

This sequence belongs to the pyruvate, phosphate/water dikinase regulatory protein family. PDRP subfamily.

It catalyses the reaction N(tele)-phospho-L-histidyl/L-threonyl-[pyruvate, phosphate dikinase] + ADP = N(tele)-phospho-L-histidyl/O-phospho-L-threonyl-[pyruvate, phosphate dikinase] + AMP + H(+). The enzyme catalyses N(tele)-phospho-L-histidyl/O-phospho-L-threonyl-[pyruvate, phosphate dikinase] + phosphate + H(+) = N(tele)-phospho-L-histidyl/L-threonyl-[pyruvate, phosphate dikinase] + diphosphate. In terms of biological role, bifunctional serine/threonine kinase and phosphorylase involved in the regulation of the pyruvate, phosphate dikinase (PPDK) by catalyzing its phosphorylation/dephosphorylation. In Agrobacterium fabrum (strain C58 / ATCC 33970) (Agrobacterium tumefaciens (strain C58)), this protein is Putative pyruvate, phosphate dikinase regulatory protein.